The sequence spans 188 residues: Molybdopterin synthase catalytic subunit (188 aa).

Residues 1–14 are compositionally biased toward low complexity; that stretch reads MTTQPPQDQTSTTP. The disordered stretch occupies residues 1-23; that stretch reads MTTQPPQDQTSTTPSLPPHLDPT. Residues 134–135, lysine 150, and 157–159 contribute to the substrate site; these read HR and KRE.

It belongs to the MoaE family. MOCS2B subfamily. In terms of assembly, heterotetramer; composed of 2 small (MOCS2A) and 2 large (MOCS2B) subunits.

The protein localises to the cytoplasm. The catalysed reaction is 2 [molybdopterin-synthase sulfur-carrier protein]-C-terminal-Gly-aminoethanethioate + cyclic pyranopterin phosphate + H2O = molybdopterin + 2 [molybdopterin-synthase sulfur-carrier protein]-C-terminal Gly-Gly + 2 H(+). It participates in cofactor biosynthesis; molybdopterin biosynthesis. Catalytic subunit of the molybdopterin synthase complex, a complex that catalyzes the conversion of precursor Z into molybdopterin. Acts by mediating the incorporation of 2 sulfur atoms from thiocarboxylated MOCS2A into precursor Z to generate a dithiolene group. This Neosartorya fischeri (strain ATCC 1020 / DSM 3700 / CBS 544.65 / FGSC A1164 / JCM 1740 / NRRL 181 / WB 181) (Aspergillus fischerianus) protein is Molybdopterin synthase catalytic subunit.